Consider the following 371-residue polypeptide: Maltose/maltodextrin import ATP-binding protein MalK (371 aa).

The ABC transporter domain occupies 4–234 (VQLQNVTKAW…PADRFVAGFI (231 aa)). 36–43 (GPSGCGKS) is a binding site for ATP.

The protein belongs to the ABC transporter superfamily. Maltooligosaccharide importer (TC 3.A.1.1.1) family. In terms of assembly, the complex is composed of two ATP-binding proteins (MalK), two transmembrane proteins (MalG and MalK) and a solute-binding protein (MalE).

It is found in the cell inner membrane. The enzyme catalyses D-maltose(out) + ATP + H2O = D-maltose(in) + ADP + phosphate + H(+). Its function is as follows. Part of the ABC transporter complex MalEFGK involved in maltose/maltodextrin import. Responsible for energy coupling to the transport system. The chain is Maltose/maltodextrin import ATP-binding protein MalK from Escherichia coli O6:K15:H31 (strain 536 / UPEC).